A 105-amino-acid chain; its full sequence is Class II hydrophobin 1 (105 aa).

The N-terminal stretch at 1–15 is a signal peptide; that stretch reads MQVLLIATLVASVLA. 4 disulfide bridges follow: Cys38-Cys87, Cys48-Cys78, Cys49-Cys58, and Cys88-Cys99.

This sequence belongs to the cerato-ulmin hydrophobin family. Homotetramer. Further self-assembles to form highly ordered films at water-air interfaces through intermolecular interactions.

Its subcellular location is the secreted. The protein localises to the cell wall. Aerial growth, conidiation, and dispersal of filamentous fungi in the environment rely upon a capability of their secreting small amphipathic proteins called hydrophobins (HPBs) with low sequence identity. Class I can self-assemble into an outermost layer of rodlet bundles on aerial cell surfaces, conferring cellular hydrophobicity that supports fungal growth, development and dispersal; whereas Class II form highly ordered films at water-air interfaces through intermolecular interactions but contribute nothing to the rodlet structure. HYD1 is a class II hydrophobin that plays roles in conidiation and cuticle-bypassing infection by regulating the transcripts of frequency clock protein frq, and velvet protein vosA, as well as primordium formation via the mitogen-activated protein kinase signaling pathway. Also participates in stress response, including tolerance of mycelia to osmotic and oxidative stresses, and conidia to high or low temperature. Acts as a defensive factor against Calcarisporium cordycipiticola infection, probably via the formation of a physical barrier to inhibit the pathogen infection owing to its hydrophobicity or binding to the effector of C.cordycipiticola, hindering the recognition of the pathogen. Finally, regulates the transcription of the AreA transcription factor at different developmental stages via a positive feedback loop. This Cordyceps militaris (Caterpillar fungus) protein is Class II hydrophobin 1.